A 162-amino-acid polypeptide reads, in one-letter code: Beta-carotene hydroxylase (162 aa).

The 128-residue stretch at 8 to 135 folds into the Fatty acid hydroxylase domain; sequence VATVLVMELT…GRDHCVSFGF (128 aa).

It belongs to the sterol desaturase family.

It catalyses the reaction all-trans-beta-carotene + 4 reduced [2Fe-2S]-[ferredoxin] + 2 O2 + 4 H(+) = all-trans-zeaxanthin + 4 oxidized [2Fe-2S]-[ferredoxin] + 2 H2O. Its pathway is carotenoid biosynthesis; astaxanthin biosynthesis. Functionally, catalyzes the hydroxylation reaction from beta-carotene to zeaxanthin via beta-cryptoxanthin. This is Beta-carotene hydroxylase (crtZ) from Paracoccus sp. (strain N81106 / MBIC 01143) (Agrobacterium aurantiacum).